Here is a 190-residue protein sequence, read N- to C-terminus: Glutathione peroxidase 2 (190 aa).

Residue U40 is part of the active site. U40 is a non-standard amino acid (selenocysteine).

Belongs to the glutathione peroxidase family. As to quaternary structure, homotetramer.

Its subcellular location is the cytoplasm. It localises to the cytosol. It catalyses the reaction 2 glutathione + H2O2 = glutathione disulfide + 2 H2O. The catalysed reaction is a hydroperoxy polyunsaturated fatty acid + 2 glutathione = a hydroxy polyunsaturated fatty acid + glutathione disulfide + H2O. It carries out the reaction tert-butyl hydroperoxide + 2 glutathione = tert-butanol + glutathione disulfide + H2O. The enzyme catalyses cumene hydroperoxide + 2 glutathione = 2-phenylpropan-2-ol + glutathione disulfide + H2O. It catalyses the reaction (13S)-hydroperoxy-(9Z,11E)-octadecadienoate + 2 glutathione = (13S)-hydroxy-(9Z,11E)-octadecadienoate + glutathione disulfide + H2O. The catalysed reaction is (5S)-hydroperoxy-(6E,8Z,11Z,14Z)-eicosatetraenoate + 2 glutathione = (5S)-hydroxy-(6E,8Z,11Z,14Z)-eicosatetraenoate + glutathione disulfide + H2O. It carries out the reaction (12R)-hydroperoxy-(5Z,8Z,10E,14Z)-eicosatetraenoate + 2 glutathione = (12R)-hydroxy-(5Z,8Z,10E,14Z)-eicosatetraenoate + glutathione disulfide + H2O. The enzyme catalyses (15S)-hydroperoxy-(5Z,8Z,11Z,13E)-eicosatetraenoate + 2 glutathione = (15S)-hydroxy-(5Z,8Z,11Z,13E)-eicosatetraenoate + glutathione disulfide + H2O. Its function is as follows. Catalyzes the reduction of hydroperoxides in a glutathione-dependent manner thus regulating cellular redox homeostasis. Can reduce small soluble hydroperoxides such as H2O2, cumene hydroperoxide and tert-butyl hydroperoxide, as well as several fatty acid-derived hydroperoxides. Cannot reduce phosphatidycholine hydroperoxide. This Callithrix jacchus (White-tufted-ear marmoset) protein is Glutathione peroxidase 2 (GPX2).